Consider the following 466-residue polypeptide: Asparagine--tRNA ligase (466 aa).

This sequence belongs to the class-II aminoacyl-tRNA synthetase family. In terms of assembly, homodimer.

It is found in the cytoplasm. It carries out the reaction tRNA(Asn) + L-asparagine + ATP = L-asparaginyl-tRNA(Asn) + AMP + diphosphate + H(+). This Buchnera aphidicola subsp. Baizongia pistaciae (strain Bp) protein is Asparagine--tRNA ligase.